Reading from the N-terminus, the 205-residue chain is Small ribosomal subunit protein uS4 (205 aa).

The interval 19–45 is disordered; sequence IWGRPKSPVNRREYGPGQHGQRRKGKL. An S4 RNA-binding domain is found at 94 to 157; the sequence is SRLDAVVYRA…KQLVIVLEAV (64 aa).

Belongs to the universal ribosomal protein uS4 family. As to quaternary structure, part of the 30S ribosomal subunit. Contacts protein S5. The interaction surface between S4 and S5 is involved in control of translational fidelity.

One of the primary rRNA binding proteins, it binds directly to 16S rRNA where it nucleates assembly of the body of the 30S subunit. Its function is as follows. With S5 and S12 plays an important role in translational accuracy. The sequence is that of Small ribosomal subunit protein uS4 from Brucella anthropi (strain ATCC 49188 / DSM 6882 / CCUG 24695 / JCM 21032 / LMG 3331 / NBRC 15819 / NCTC 12168 / Alc 37) (Ochrobactrum anthropi).